The primary structure comprises 163 residues: Nucleotide-binding protein MAP_4063c (163 aa).

It belongs to the YajQ family.

Its function is as follows. Nucleotide-binding protein. The polypeptide is Nucleotide-binding protein MAP_4063c (Mycolicibacterium paratuberculosis (strain ATCC BAA-968 / K-10) (Mycobacterium paratuberculosis)).